Consider the following 223-residue polypeptide: MMQLVHLFMDEITMDPLHAVYLTVGLFVITFFNPGANLFVVVQTSLASGRRAGVLTGLGVALGDAFYSGLGLFGLATLITQCEEIFSLIRIVGGAYLLWFAWCSMRRQSTPQMSTLQQPISAPWYVFFRRGLITDLSNPQTVLFFISIFSVTLNAETPTWARLMAWAGIVLASIIWRVFLSQAFSLPAVRRAYGRMQRVASRVIGAIIGVFALRLIYEGVTQR.

The next 4 membrane-spanning stretches (helical) occupy residues 22–42, 59–79, 85–105, and 164–184; these read LTVG…FVVV, GVAL…ATLI, IFSL…WCSM, and MAWA…SQAF.

This sequence belongs to the Rht family.

The protein resides in the cell membrane. This is an uncharacterized protein from Escherichia coli (strain K12).